Reading from the N-terminus, the 149-residue chain is Macrodomain Ter protein (149 aa).

Belongs to the MatP family. As to quaternary structure, homodimer.

It is found in the cytoplasm. Functionally, required for spatial organization of the terminus region of the chromosome (Ter macrodomain) during the cell cycle. Prevents early segregation of duplicated Ter macrodomains during cell division. Binds specifically to matS, which is a 13 bp signature motif repeated within the Ter macrodomain. This chain is Macrodomain Ter protein, found in Vibrio cholerae serotype O1 (strain ATCC 39315 / El Tor Inaba N16961).